The primary structure comprises 443 residues: Probable nitrate/nitrite antiporter NarK1 (443 aa).

12 consecutive transmembrane segments (helical) span residues 23–43 (TLAF…GVPI), 56–76 (WISA…GILA), 79–99 (YGGR…AYLV), 108–128 (LLLY…GIAW), 142–164 (LGVF…ALIA), 182–202 (FIPF…WFGT), 230–250 (FSLY…WLPK), 255–275 (VFGL…FPAS), 298–318 (FGII…IVLY), 329–349 (FTMG…GMGI), 368–388 (AVGG…PPLF), and 401–421 (TFFV…LTVL).

The protein belongs to the major facilitator superfamily. Nitrate/nitrite porter (TC 2.A.1.8) family.

It is found in the cell membrane. The enzyme catalyses nitrate(in) + nitrite(out) = nitrate(out) + nitrite(in). Probable nitrate/nitrite antiporter that may be involved in nitrate import and nitrite export during anaerobic growth. This Thermus thermophilus protein is Probable nitrate/nitrite antiporter NarK1.